The primary structure comprises 133 residues: Large-conductance mechanosensitive channel (133 aa).

The next 2 helical transmembrane spans lie at 19–39 (IDLA…TSLV) and 79–99 (IQSV…VKLI).

The protein belongs to the MscL family. In terms of assembly, homopentamer.

It localises to the cell membrane. Channel that opens in response to stretch forces in the membrane lipid bilayer. May participate in the regulation of osmotic pressure changes within the cell. The polypeptide is Large-conductance mechanosensitive channel (Clostridium tetani (strain Massachusetts / E88)).